A 512-amino-acid polypeptide reads, in one-letter code: Extracellular serine/threonine protein kinase CeFam20 (512 aa).

Over 1–6 (MRCNIK) the chain is Cytoplasmic. Residues 7–26 (RLFTLAIGVFAATLVIISFS) traverse the membrane as a helical; Signal-anchor for type II membrane protein segment. Over 27-512 (KDNYEREWKQ…QDKKDDKKTV (486 aa)) the chain is Lumenal. Residues Cys-110 and Cys-144 are joined by a disulfide bond. N-linked (GlcNAc...) asparagine glycosylation occurs at Asn-113. Residues Gln-176, Lys-192, and Glu-213 each contribute to the ATP site. Glu-213 contributes to the Mn(2+) binding site. Asn-242 carries N-linked (GlcNAc...) asparagine glycosylation. 2 disulfides stabilise this stretch: Cys-268–Cys-284 and Cys-273–Cys-277. 295-298 (QVFL) is an ATP binding site. Cystine bridges form between Cys-333–Cys-409 and Cys-410–Cys-469. Residue Asp-366 is part of the active site. Residues Glu-371 and Asp-387 each contribute to the ATP site. Asp-387 contributes to the Mn(2+) binding site. The tract at residues 486–512 (PDVSDAEQNDEEQSEEHQDKKDDKKTV) is disordered. The segment covering 489-499 (SDAEQNDEEQS) has biased composition (acidic residues). Basic and acidic residues predominate over residues 500–512 (EEHQDKKDDKKTV).

Belongs to the FAM20 family. The cofactor is Mn(2+).

The protein resides in the golgi apparatus membrane. It is found in the secreted. The enzyme catalyses L-seryl-[protein] + ATP = O-phospho-L-seryl-[protein] + ADP + H(+). It catalyses the reaction L-threonyl-[protein] + ATP = O-phospho-L-threonyl-[protein] + ADP + H(+). Its function is as follows. Golgi serine/threonine protein kinase that phosphorylates secretory pathway proteins within Ser-x-Glu/pSer motifs. In Caenorhabditis elegans, this protein is Extracellular serine/threonine protein kinase CeFam20.